The chain runs to 1242 residues: Structural polyprotein (1242 aa).

Residues Trp-14 to Arg-101 are disordered. Over residues Arg-26–Gln-42 the composition is skewed to low complexity. The interval Gln-35–Gln-66 is host transcription inhibition. The Nuclear localization signal signature appears at Pro-59 to Pro-96. Residues Arg-61–Lys-73 show a composition bias toward basic residues. Positions Pro-74–Pro-86 are enriched in basic and acidic residues. Residues Gln-82–Ile-111 are binding to the viral RNA. The segment covering Lys-87–Arg-98 has biased composition (basic residues). The tract at residues Pro-96 to Cys-110 is ribosome-binding. Residues Cys-110 and Cys-125 are joined by a disulfide bond. In terms of domain architecture, Peptidase S3 spans Cys-110 to Trp-258. His-136 serves as the catalytic Charge relay system. The Nuclear export signal motif lies at Ile-141–Tyr-151. Residues Lys-152–Tyr-157 form an interaction with spike glycoprotein E2 region. Asp-158 serves as the catalytic Charge relay system. The dimerization of the capsid protein stretch occupies residues Pro-180–Ala-190. Ser-210 functions as the Charge relay system in the catalytic mechanism. Residues Asp-216–Pro-220 are dimerization of the capsid protein. Residues Ala-259 to Ile-272 form a functions as an uncleaved signal peptide for the precursor of protein E3/E2 region. Intrachain disulfides connect Cys-267–Cys-276, Cys-281–Cys-285, Cys-284–Cys-316, Cys-343–Cys-449, Cys-346–Cys-352, Cys-415–Cys-429, Cys-477–Cys-589, and Cys-527–Cys-544. An N-linked (GlcNAc...) asparagine; by host glycan is attached at Asn-271. Over Ser-325–Thr-690 the chain is Extracellular. 2 interaction with host Mxra8 receptor regions span residues His-350–His-353 and His-386–His-388. Interaction with host Mxra8 receptor stretches follow at residues Gln-508–Asn-511 and Thr-540–Val-546. N-linked (GlcNAc...) asparagine; by host glycosylation occurs at Asn-586. A helical membrane pass occupies residues Ile-691–Met-711. At Cys-712–Ala-746 the chain is on the cytoplasmic side. Residues Val-714–Lys-718 are interaction with the capsid protein. Residues Cys-719, Cys-739, and Cys-740 are each lipidated (S-palmitoyl cysteine; by host). Residues Cys-719 to Cys-739 are transient transmembrane before p62-6K protein processing. Cys-719 and Cys-740 are disulfide-bonded. At Ala-747–Gln-761 the chain is on the extracellular side. N-linked (GlcNAc...) asparagine; by host glycosylation is present at Asn-760. A helical membrane pass occupies residues Ser-762–Ala-782. Over Arg-783–Leu-785 the chain is Cytoplasmic. Residues Leu-786 to Ala-806 traverse the membrane as a helical segment. Residues Tyr-807 to Leu-1217 are Extracellular-facing. Cystine bridges form between Cys-855–Cys-920, Cys-868–Cys-900, Cys-869–Cys-902, and Cys-874–Cys-884. Residues Val-890–Thr-907 form an E1 fusion peptide loop region. N-linked (GlcNAc...) asparagine; by host glycosylation is found at Asn-947 and Asn-1076. Cystine bridges form between Cys-1065–Cys-1077, Cys-1107–Cys-1180, Cys-1112–Cys-1184, and Cys-1134–Cys-1174. A helical membrane pass occupies residues Ala-1218 to Val-1238. Cys-1237 is lipidated: S-palmitoyl cysteine; by host. At Thr-1239 to Arg-1242 the chain is on the cytoplasmic side.

As to quaternary structure, homodimer. Homomultimer. Interacts with host karyopherin KPNA4; this interaction allows the nuclear import of the viral capsid protein. Interacts with spike glycoprotein E2. Interacts with host IRAK1; the interaction leads to inhibition of IRAK1-dependent signaling. The precursor of protein E3/E2 and E1 form a heterodimer shortly after synthesis. In terms of assembly, the precursor of protein E3/E2 and E1 form a heterodimer shortly after synthesis. Processing of the precursor of protein E3/E2 into E2 and E3 results in a heterodimer of the spike glycoproteins E2 and E1. Spike at virion surface are constituted of a trimer of E2-E1 heterodimers. After target cell attachment and endocytosis, E1 change conformation to form homotrimers. Interacts with 6K protein. As to quaternary structure, interacts with spike glycoprotein E1. Processing of the precursor of protein E3/E2 into E2 and E3 results in a heterodimer of the spike glycoproteins E2 and E1. Spike at virion surface are constituted of a trimer of E2-E1 heterodimers. Interacts with 6K protein. Interacts with host MXRA8; this interaction mediates virus entry. Oligomer. Interacts with spike glycoprotein E1. Interacts with spike glycoprotein E2. In terms of processing, structural polyprotein: Specific enzymatic cleavages in vivo yield mature proteins. Capsid protein is auto-cleaved during polyprotein translation, unmasking a signal peptide at the N-terminus of the precursor of E3/E2. The remaining polyprotein is then targeted to the host endoplasmic reticulum, where host signal peptidase cleaves it into pE2, 6K and E1 proteins. pE2 is further processed to mature E3 and E2 by host furin in trans-Golgi vesicle. Palmitoylated via thioester bonds. These palmitoylations may induce disruption of the C-terminus transmembrane. This would result in the reorientation of E2 C-terminus from lumenal to cytoplasmic side. Post-translationally, N-glycosylated. In terms of processing, palmitoylated via thioester bonds.

The protein localises to the virion. It is found in the host cytoplasm. Its subcellular location is the host cell membrane. The protein resides in the host nucleus. It localises to the virion membrane. The protein localises to the host Golgi apparatus. It is found in the host trans-Golgi network. Its subcellular location is the host endoplasmic reticulum. The enzyme catalyses Autocatalytic release of the core protein from the N-terminus of the togavirus structural polyprotein by hydrolysis of a -Trp-|-Ser- bond.. In terms of biological role, forms an icosahedral capsid with a T=4 symmetry composed of 240 copies of the capsid protein surrounded by a lipid membrane through which penetrate 80 spikes composed of trimers of E1-E2 heterodimers. The capsid protein binds to the viral RNA genome at a site adjacent to a ribosome binding site for viral genome translation following genome release. Possesses a protease activity that results in its autocatalytic cleavage from the nascent structural protein. Following its self-cleavage, the capsid protein transiently associates with ribosomes, and within several minutes the protein binds to viral RNA and rapidly assembles into icosahedric core particles. The resulting nucleocapsid eventually associates with the cytoplasmic domain of the spike glycoprotein E2 at the cell membrane, leading to budding and formation of mature virions. In case of infection, new virions attach to target cells and after clathrin-mediated endocytosis their membrane fuses with the host endosomal membrane. This leads to the release of the nucleocapsid into the cytoplasm, followed by an uncoating event necessary for the genomic RNA to become accessible. The uncoating might be triggered by the interaction of capsid proteins with ribosomes. Binding of ribosomes would release the genomic RNA since the same region is genomic RNA-binding and ribosome-binding. Specifically inhibits interleukin-1 receptor-associated kinase 1/IRAK1-dependent signaling during viral entry, representing a means by which the alphaviruses may evade innate immune detection and activation prior to viral gene expression. Functionally, provides the signal sequence for the translocation of the precursor of protein E3/E2 to the host endoplasmic reticulum. Furin-cleaved E3 remains associated with spike glycoprotein E1 and mediates pH protection of the latter during the transport via the secretory pathway. After virion release from the host cell, the assembly protein E3 is gradually released in the extracellular space. Plays a role in viral attachment to target host cell, by binding to the cell receptor MXRA8. Synthesized as a p62 precursor which is processed by furin at the cell membrane just before virion budding, giving rise to E2-E1 heterodimer. The p62-E1 heterodimer is stable, whereas E2-E1 is unstable and dissociate at low pH. p62 is processed at the last step, presumably to avoid E1 fusion activation before its final export to cell surface. E2 C-terminus contains a transitory transmembrane that would be disrupted by palmitoylation, resulting in reorientation of the C-terminal tail from lumenal to cytoplasmic side. This step is critical since E2 C-terminus is involved in budding by interacting with capsid proteins. This release of E2 C-terminus in cytoplasm occurs lately in protein export, and precludes premature assembly of particles at the endoplasmic reticulum membrane. Its function is as follows. Acts as a viroporin that participates in virus glycoprotein processing and transport to the plasma membrane, cell permeabilization and budding of viral particles. Disrupts the calcium homeostasis of the cell, probably at the endoplasmic reticulum level. This leads to cytoplasmic calcium elevation. Because of its lipophilic properties, the 6K protein is postulated to influence the selection of lipids that interact with the transmembrane domains of the glycoproteins, which, in turn, affects the deformability of the bilayer required for the extreme curvature that occurs as budding proceeds. Present in low amount in virions, about 3% compared to viral glycoproteins. In terms of biological role, class II viral fusion protein. Fusion activity is inactive as long as E1 is bound to E2 in mature virion. After virus attachment to target cell via host MXRA8 and endocytosis, acidification of the endosome induce dissociation of E1/E2 heterodimer and concomitant trimerization of the E1 subunits. This E1 trimer is fusion active, and promotes release of viral nucleocapsid in cytoplasm after endosome and viral membrane fusion. Efficient fusion requires the presence of cholesterol and sphingolipid in the target membrane. This chain is Structural polyprotein, found in Mayaro virus (strain Brazil) (MAYV).